The primary structure comprises 455 residues: Adenylyltransferase and sulfurtransferase UBA4 (455 aa).

Residues Gly93, Asp114, 121 to 125 (SNLHR), Lys138, and 182 to 183 (DH) each bind ATP. Zn(2+)-binding residues include Cys224 and Cys227. Residue Cys241 is the Glycyl thioester intermediate; for adenylyltransferase activity of the active site. 2 residues coordinate Zn(2+): Cys302 and Cys305. One can recognise a Rhodanese domain in the interval 355-453 (QSREHTLIDV…WSEDIDAAFP (99 aa)). The active-site Cysteine persulfide intermediate; for sulfurtransferase activity is the Cys413.

The protein in the N-terminal section; belongs to the HesA/MoeB/ThiF family. UBA4 subfamily. It depends on Zn(2+) as a cofactor.

It is found in the cytoplasm. The protein resides in the cytosol. The protein operates within tRNA modification; 5-methoxycarbonylmethyl-2-thiouridine-tRNA biosynthesis. Plays a central role in 2-thiolation of mcm(5)S(2)U at tRNA wobble positions of cytosolic tRNA(Lys), tRNA(Glu) and tRNA(Gln). Acts by mediating the C-terminal thiocarboxylation of sulfur carrier URM1. Its N-terminus first activates URM1 as acyl-adenylate (-COAMP), then the persulfide sulfur on the catalytic cysteine is transferred to URM1 to form thiocarboxylation (-COSH) of its C-terminus. The reaction probably involves hydrogen sulfide that is generated from the persulfide intermediate and that acts as a nucleophile towards URM1. Subsequently, a transient disulfide bond is formed. Does not use thiosulfate as sulfur donor; NFS1 probably acting as a sulfur donor for thiocarboxylation reactions. Prior mcm(5) tRNA modification by the elongator complex is required for 2-thiolation. May also be involved in protein urmylation. The protein is Adenylyltransferase and sulfurtransferase UBA4 of Lodderomyces elongisporus (strain ATCC 11503 / CBS 2605 / JCM 1781 / NBRC 1676 / NRRL YB-4239) (Yeast).